We begin with the raw amino-acid sequence, 32 residues long: Cytochrome b6-f complex subunit 7 (32 aa).

Residues 9-27 (AAVFWILIPIGLVGGALLL) traverse the membrane as a helical segment.

It belongs to the PetM family. As to quaternary structure, the 4 large subunits of the cytochrome b6-f complex are cytochrome b6, subunit IV (17 kDa polypeptide, PetD), cytochrome f and the Rieske protein, while the 4 small subunits are PetG, PetL, PetM and PetN. The complex functions as a dimer.

It localises to the cellular thylakoid membrane. In terms of biological role, component of the cytochrome b6-f complex, which mediates electron transfer between photosystem II (PSII) and photosystem I (PSI), cyclic electron flow around PSI, and state transitions. The polypeptide is Cytochrome b6-f complex subunit 7 (Prochlorococcus marinus (strain MIT 9515)).